The primary structure comprises 253 residues: MENSMMFISRSLRRPVTALNCNLQSVRTVIYLHKGPRINGLRRDPESYLRNPSGVLFTEVNAKECQDKVRSILQLPKYGINLSNELILQCLTHKSFAHGSKPYNEKLNLLGAQFLKLQTCIHSLKNGSPAESCENGQLSLQFSNLGTKFAKELTSKNTACTFVKLHNLDPFIFWKMRDPIKDGHINGETTIFASVLNAFIGAILSTNGSEKAAKFIQGSLLDKEDLHSLVNIANENVASAKAKISDKENKAFL.

The transit peptide at 1–28 (MENSMMFISRSLRRPVTALNCNLQSVRT) directs the protein to the mitochondrion.

Belongs to the ribonuclease III family. Mitochondrion-specific ribosomal protein mL57 subfamily. In terms of assembly, component of the mitochondrial large ribosomal subunit (mt-LSU). Mature yeast 74S mitochondrial ribosomes consist of a small (37S) and a large (54S) subunit. The 37S small subunit contains a 15S ribosomal RNA (15S mt-rRNA) and 34 different proteins. The 54S large subunit contains a 21S rRNA (21S mt-rRNA) and 46 different proteins. mL57 forms a heterodimer with mL44 and stabilizes rRNA expansion segments 1/2 at a membrane-facing protuberance close to the point of attachment of the ribosome to the translocon in the membrane.

The protein localises to the mitochondrion. Its function is as follows. Component of the mitochondrial ribosome (mitoribosome), a dedicated translation machinery responsible for the synthesis of mitochondrial genome-encoded proteins, including at least some of the essential transmembrane subunits of the mitochondrial respiratory chain. The mitoribosomes are attached to the mitochondrial inner membrane and translation products are cotranslationally integrated into the membrane. The polypeptide is Large ribosomal subunit protein mL57 (MRPL15) (Saccharomyces cerevisiae (strain ATCC 204508 / S288c) (Baker's yeast)).